The primary structure comprises 308 residues: Ribonuclease Z (308 aa).

Zn(2+) is bound by residues His-63, His-65, Asp-67, His-68, His-141, Asp-212, and His-270. Asp-67 serves as the catalytic Proton acceptor.

This sequence belongs to the RNase Z family. Homodimer. Requires Zn(2+) as cofactor.

The catalysed reaction is Endonucleolytic cleavage of RNA, removing extra 3' nucleotides from tRNA precursor, generating 3' termini of tRNAs. A 3'-hydroxy group is left at the tRNA terminus and a 5'-phosphoryl group is left at the trailer molecule.. Functionally, zinc phosphodiesterase, which displays some tRNA 3'-processing endonuclease activity. Probably involved in tRNA maturation, by removing a 3'-trailer from precursor tRNA. The chain is Ribonuclease Z from Pediococcus pentosaceus (strain ATCC 25745 / CCUG 21536 / LMG 10740 / 183-1w).